The sequence spans 145 residues: Neutral phospholipase A2 homolog taipoxin beta chain 1 (145 aa).

An N-terminal signal peptide occupies residues 1–27 (MHPAHLLVLLAVCVSLLGASDIPPLPL). Intrachain disulfides connect Cys-38–Cys-98, Cys-54–Cys-144, Cys-56–Cys-72, Cys-71–Cys-125, Cys-78–Cys-118, Cys-87–Cys-111, and Cys-105–Cys-116.

This sequence belongs to the phospholipase A2 family. Group I subfamily. D49 sub-subfamily. As to quaternary structure, heterotrimer of alpha, beta, and gamma chains; non-covalently linked. Expressed by the venom gland.

The protein localises to the secreted. Its function is as follows. Heterotrimer: Snake venom phospholipase A2 (PLA2) heterotrimer that acts as a potent presynaptic neurotoxin by blocking synaptic transmission and synaptic vesicle recycling. May act by binding in a calcium-dependent fashion to neurotonal pentraxin-1 (NPTX1) and neurotonal pentraxin-2 (NPTX2), but not to neuronal pentraxin receptor (NPTXR). Also binds to taipoxin-associated calcium binding protein 49 (RCN2), a protein localized in the lumen of endoplasmic reticulum. In terms of biological role, monomer (beta chain): Snake venom phospholipase A2 homolog that is neither toxic nor enzymatically active. Does not bind calcium. The polypeptide is Neutral phospholipase A2 homolog taipoxin beta chain 1 (Oxyuranus scutellatus scutellatus (Australian taipan)).